Consider the following 443-residue polypeptide: Mitochondrial enolase superfamily member 1 (443 aa).

Substrate is bound by residues 24 to 26 and Tyr34; that span reads GAD. Position 148 is a phosphoserine (Ser148). Residue Lys220 participates in substrate binding. Lys222 functions as the Proton donor/acceptor in the catalytic mechanism. Asp250 contacts Mg(2+). Residues Asn252, Glu276, Glu305, 355–357, and Glu386 each bind substrate; that span reads HAG. Residues Glu276 and Glu305 each contribute to the Mg(2+) site. His355 is a catalytic residue.

It belongs to the mandelate racemase/muconate lactonizing enzyme family. ENOSF1 subfamily. The cofactor is Mg(2+). Could be sumoylated.

The protein resides in the mitochondrion. It carries out the reaction L-fuconate = 2-dehydro-3-deoxy-L-fuconate + H2O. Functionally, plays a role in the catabolism of L-fucose, a sugar that is part of the carbohydrates that are attached to cellular glycoproteins. Catalyzes the dehydration of L-fuconate to 2-keto-3-deoxy-L-fuconate by the abstraction of the 2-proton to generate an enediolate intermediate that is stabilized by the magnesium ion. The polypeptide is Mitochondrial enolase superfamily member 1 (ENOSF1) (Homo sapiens (Human)).